A 379-amino-acid polypeptide reads, in one-letter code: MKYVDEFRDGATARQLAARIAAEADPARQYRLMEFCGGHTHAIFRYGIPDLLPASVRLIHGPGCPVCVMPIGRLDMAIELARRPEVILCTYGDMLRVPASGRVSLLKARAESAAVRMLYSPAEALKLAQDNPSKEVVFFAIGFETTTPPTALVIEQAQRLGLKNFSVFCNHVLTPAAMHAILATPEARAGTLQLDGFIGPAHVSTVIGSAPYAPFPQQYGTPLVIAGFEPLDLLQALLMLVRQLNEGRAEVENQFTRAVTAEGNRKAKALTERVFEVRESFEWRGLGAVPHSALQIREAFAEFNAERRFALEPRTGLENKACECPAILRGAKSPRDCKLFGNPCTPDNPLGSCMVSSEGACAAWYAYGRQRQAAVEVAR.

Fe cation contacts are provided by C36, C64, and C67.

It belongs to the HypD family.

The sequence is that of Hydrogenase expression/formation protein HupD (hupD) from Azotobacter chroococcum mcd 1.